Reading from the N-terminus, the 202-residue chain is Casparian strip membrane protein 1 (202 aa).

The Cytoplasmic portion of the chain corresponds to 1–42 (MEKNKSTAIEIAESSKESKGKAPLLAAAVGHDRAAGYKRGVS). The helical transmembrane segment at 43-63 (IFDLFLRISAATAALAATIVM) threads the bilayer. At 64-90 (GTTEQTLPFFTQFFQFRAQYDDLPTFT) the chain is on the extracellular side. The helical transmembrane segment at 91–111 (FFVVGMAIVTGYLILSVPFSI) threads the bilayer. The Cytoplasmic segment spans residues 112–130 (VCIARPVAIGPRFLLIVGD). A helical membrane pass occupies residues 131–151 (TLKAVLATSAAGSSAAIVYLA). Residues 152–173 (HNGNSDANWLDICQQFNDFCQR) lie on the Extracellular side of the membrane. The helical transmembrane segment at 174-194 (VSGAVVAAFVAVVLLIFLIVL) threads the bilayer. The Cytoplasmic portion of the chain corresponds to 195 to 202 (SAMALRKN).

This sequence belongs to the Casparian strip membrane proteins (CASP) family. Homodimer and heterodimers.

It localises to the cell membrane. In terms of biological role, regulates membrane-cell wall junctions and localized cell wall deposition. Required for establishment of the Casparian strip membrane domain (CSD) and the subsequent formation of Casparian strips, a cell wall modification of the root endodermis that determines an apoplastic barrier between the intraorganismal apoplasm and the extraorganismal apoplasm and prevents lateral diffusion. The protein is Casparian strip membrane protein 1 of Striga hermonthica (Purple witchweed).